The primary structure comprises 881 residues: Nitrate reductase [NADH] 1 (881 aa).

The interval 1–46 is disordered; it reads MAASVEHRPFTSHQHGVVRSFKSYPDVPRPKKLPLPQPLSDSTNDN. C167 contacts Mo-molybdopterin. A Cytochrome b5 heme-binding domain is found at 515 to 590; sequence TKSYSLSEVR…LEDYRIGELM (76 aa). Heme-binding residues include H550 and H573. Positions 625-737 constitute an FAD-binding FR-type domain; the sequence is REKIPCKLLS…KGPLGHIEYT (113 aa). FAD is bound by residues 677–680, 694–698, F699, F706, 711–713, and T764; these read RAYT, VVKVY, and IMS.

Belongs to the nitrate reductase family. As to quaternary structure, homodimer. It depends on FAD as a cofactor. Requires heme as cofactor. Mo-molybdopterin is required as a cofactor.

It catalyses the reaction nitrite + NAD(+) + H2O = nitrate + NADH + H(+). Functionally, nitrate reductase is a key enzyme involved in the first step of nitrate assimilation in plants, fungi and bacteria. In Phaseolus vulgaris (Kidney bean), this protein is Nitrate reductase [NADH] 1 (NIA1).